The primary structure comprises 427 residues: Glutamate-1-semialdehyde 2,1-aminomutase (427 aa).

Residue Lys-265 is modified to N6-(pyridoxal phosphate)lysine.

Belongs to the class-III pyridoxal-phosphate-dependent aminotransferase family. HemL subfamily. As to quaternary structure, homodimer. Requires pyridoxal 5'-phosphate as cofactor.

The protein resides in the cytoplasm. The catalysed reaction is (S)-4-amino-5-oxopentanoate = 5-aminolevulinate. Its pathway is porphyrin-containing compound metabolism; protoporphyrin-IX biosynthesis; 5-aminolevulinate from L-glutamyl-tRNA(Glu): step 2/2. The protein is Glutamate-1-semialdehyde 2,1-aminomutase of Bordetella parapertussis (strain 12822 / ATCC BAA-587 / NCTC 13253).